The primary structure comprises 738 residues: 1,4-alpha-glucan branching enzyme GlgB (738 aa).

The active-site Nucleophile is the Asp-399. Glu-452 (proton donor) is an active-site residue.

Belongs to the glycosyl hydrolase 13 family. GlgB subfamily. Monomer.

It catalyses the reaction Transfers a segment of a (1-&gt;4)-alpha-D-glucan chain to a primary hydroxy group in a similar glucan chain.. It participates in glycan biosynthesis; glycogen biosynthesis. Catalyzes the formation of the alpha-1,6-glucosidic linkages in glycogen by scission of a 1,4-alpha-linked oligosaccharide from growing alpha-1,4-glucan chains and the subsequent attachment of the oligosaccharide to the alpha-1,6 position. The chain is 1,4-alpha-glucan branching enzyme GlgB from Chlamydia trachomatis serovar A (strain ATCC VR-571B / DSM 19440 / HAR-13).